The following is a 435-amino-acid chain: Bifunctional protein GlmU (435 aa).

The pyrophosphorylase stretch occupies residues 1–224 (MNDTSIIILA…EQNFMGINDK (224 aa)). Residues 9-12 (LAAG), lysine 23, glutamine 75, and 82-83 (GT) contribute to the UDP-N-acetyl-alpha-D-glucosamine site. Aspartate 103 contributes to the Mg(2+) binding site. Positions 136, 150, 165, and 222 each coordinate UDP-N-acetyl-alpha-D-glucosamine. Asparagine 222 contacts Mg(2+). The interval 225–245 (FQLSVAEKIMQDEIKQDLMKA) is linker. Positions 246–435 (GVLMRLPESI…KFFGKNNAEK (190 aa)) are N-acetyltransferase. Residues arginine 309 and lysine 326 each contribute to the UDP-N-acetyl-alpha-D-glucosamine site. Histidine 337 acts as the Proton acceptor in catalysis. UDP-N-acetyl-alpha-D-glucosamine contacts are provided by tyrosine 340 and asparagine 351. Acetyl-CoA is bound by residues 360–361 (NY), serine 379, alanine 397, and arginine 414.

The protein in the N-terminal section; belongs to the N-acetylglucosamine-1-phosphate uridyltransferase family. It in the C-terminal section; belongs to the transferase hexapeptide repeat family. As to quaternary structure, homotrimer. Requires Mg(2+) as cofactor.

Its subcellular location is the cytoplasm. The enzyme catalyses alpha-D-glucosamine 1-phosphate + acetyl-CoA = N-acetyl-alpha-D-glucosamine 1-phosphate + CoA + H(+). The catalysed reaction is N-acetyl-alpha-D-glucosamine 1-phosphate + UTP + H(+) = UDP-N-acetyl-alpha-D-glucosamine + diphosphate. It participates in nucleotide-sugar biosynthesis; UDP-N-acetyl-alpha-D-glucosamine biosynthesis; N-acetyl-alpha-D-glucosamine 1-phosphate from alpha-D-glucosamine 6-phosphate (route II): step 2/2. The protein operates within nucleotide-sugar biosynthesis; UDP-N-acetyl-alpha-D-glucosamine biosynthesis; UDP-N-acetyl-alpha-D-glucosamine from N-acetyl-alpha-D-glucosamine 1-phosphate: step 1/1. It functions in the pathway bacterial outer membrane biogenesis; LPS lipid A biosynthesis. Functionally, catalyzes the last two sequential reactions in the de novo biosynthetic pathway for UDP-N-acetylglucosamine (UDP-GlcNAc). The C-terminal domain catalyzes the transfer of acetyl group from acetyl coenzyme A to glucosamine-1-phosphate (GlcN-1-P) to produce N-acetylglucosamine-1-phosphate (GlcNAc-1-P), which is converted into UDP-GlcNAc by the transfer of uridine 5-monophosphate (from uridine 5-triphosphate), a reaction catalyzed by the N-terminal domain. This chain is Bifunctional protein GlmU, found in Campylobacter curvus (strain 525.92).